The chain runs to 189 residues: GTP cyclohydrolase 1 (189 aa).

The Zn(2+) site is built by cysteine 80, histidine 83, and cysteine 152.

Belongs to the GTP cyclohydrolase I family. In terms of assembly, toroid-shaped homodecamer, composed of two pentamers of five dimers.

The catalysed reaction is GTP + H2O = 7,8-dihydroneopterin 3'-triphosphate + formate + H(+). Its pathway is cofactor biosynthesis; 7,8-dihydroneopterin triphosphate biosynthesis; 7,8-dihydroneopterin triphosphate from GTP: step 1/1. In Latilactobacillus sakei subsp. sakei (strain 23K) (Lactobacillus sakei subsp. sakei), this protein is GTP cyclohydrolase 1.